The sequence spans 469 residues: RuvB-like helicase 2 (469 aa).

ATP is bound at residue 73–80; sequence GEPGTGKT.

Belongs to the RuvB family. Forms homohexameric rings. May form a dodecamer with rvb1 made of two stacked hexameric rings. Component of the chromatin remodeling Ino80 complex. Component of the RNA polymerase II holoenzyme complex.

It is found in the nucleus. It catalyses the reaction ATP + H2O = ADP + phosphate + H(+). Has double-stranded DNA-stimulated ATPase and ATP-dependent DNA helicase (5' to 3') activity suggesting a role in nuclear processes such as recombination and transcription. Its function is as follows. Proposed core component of the chromatin remodeling Ino80 complex which is involved in transcriptional regulation, DNA replication and probably DNA repair. The sequence is that of RuvB-like helicase 2 (rvb2) from Dictyostelium discoideum (Social amoeba).